A 337-amino-acid polypeptide reads, in one-letter code: Tryptophan--tRNA ligase (337 aa).

ATP contacts are provided by residues 12 to 14 (QPS) and 21 to 22 (GN). A 'HIGH' region motif is present at residues 13 to 22 (PSADSLHLGN). An L-tryptophan-binding site is contributed by D138. ATP is bound by residues 150–152 (GDD), I189, and 198–202 (KMSKS). The 'KMSKS' region motif lies at 198 to 202 (KMSKS).

The protein belongs to the class-I aminoacyl-tRNA synthetase family. As to quaternary structure, homodimer.

Its subcellular location is the cytoplasm. It carries out the reaction tRNA(Trp) + L-tryptophan + ATP = L-tryptophyl-tRNA(Trp) + AMP + diphosphate + H(+). Functionally, catalyzes the attachment of tryptophan to tRNA(Trp). This is Tryptophan--tRNA ligase from Leifsonia xyli subsp. xyli (strain CTCB07).